The chain runs to 176 residues: ATP-dependent protease subunit HslV (176 aa).

The active site involves T2. The Na(+) site is built by G157, C160, and T163.

The protein belongs to the peptidase T1B family. HslV subfamily. In terms of assembly, a double ring-shaped homohexamer of HslV is capped on each side by a ring-shaped HslU homohexamer. The assembly of the HslU/HslV complex is dependent on binding of ATP.

It is found in the cytoplasm. The catalysed reaction is ATP-dependent cleavage of peptide bonds with broad specificity.. Allosterically activated by HslU binding. Its function is as follows. Protease subunit of a proteasome-like degradation complex believed to be a general protein degrading machinery. The polypeptide is ATP-dependent protease subunit HslV (Proteus mirabilis (strain HI4320)).